The primary structure comprises 1383 residues: DNA-directed RNA polymerase subunit beta'' (1383 aa).

Zn(2+) contacts are provided by cysteine 220, cysteine 289, cysteine 296, and cysteine 299.

This sequence belongs to the RNA polymerase beta' chain family. RpoC2 subfamily. In terms of assembly, in plastids the minimal PEP RNA polymerase catalytic core is composed of four subunits: alpha, beta, beta', and beta''. When a (nuclear-encoded) sigma factor is associated with the core the holoenzyme is formed, which can initiate transcription. Requires Zn(2+) as cofactor.

The protein resides in the plastid. It is found in the chloroplast. The catalysed reaction is RNA(n) + a ribonucleoside 5'-triphosphate = RNA(n+1) + diphosphate. DNA-dependent RNA polymerase catalyzes the transcription of DNA into RNA using the four ribonucleoside triphosphates as substrates. The chain is DNA-directed RNA polymerase subunit beta'' from Oenothera biennis (German evening primrose).